The following is a 208-amino-acid chain: Histone H1t (208 aa).

Positions 1–16 are enriched in low complexity; it reads MSETVPAASAGAVPAV. The interval 1–40 is disordered; that stretch reads MSETVPAASAGAVPAVMEKPLTKKRGKKPAGLTSASRKAP. Ser-9 bears the Phosphoserine mark. The 74-residue stretch at 40–113 folds into the H15 domain; it reads PNLSVSKLIT…GASGSFKLSK (74 aa). Arg-58 bears the Citrulline mark. Residues 102-208 are disordered; that stretch reads GTGASGSFKL…ANIRKATSRK (107 aa). Residues 111-136 show a composition bias toward basic residues; sequence LSKKVLPKSTRRKANKSASAKTKKLV. Ser-143 is modified (phosphoserine). A compositionally biased stretch (basic residues) spans 148-157; the sequence is KTNKRAKKPR. Phosphothreonine is present on Thr-159. Over residues 163-175 the composition is skewed to basic residues; that stretch reads KAVRSGRKAKGAK. Phosphoserine is present on residues Ser-167 and Ser-182. Basic residues predominate over residues 187–208; sequence RATKPKLTQHHKANIRKATSRK.

This sequence belongs to the histone H1/H5 family. Post-translationally, phosphorylated in early spermatids. In terms of processing, citrullination at Arg-58 (H1R54ci) by PADI4 takes place within the DNA-binding site of H1 and results in its displacement from chromatin and global chromatin decondensation, thereby promoting pluripotency and stem cell maintenance.

Its function is as follows. Testis-specific histone H1 that forms less compacted chromatin compared to other H1 histone subtypes. Formation of more relaxed chromatin may be required to promote chromatin architecture required for proper chromosome regulation during meiosis, such as homologous recombination. Histones H1 act as linkers that bind to nucleosomes and compact polynucleosomes into a higher-order chromatin configuration. The chain is Histone H1t from Macaca mulatta (Rhesus macaque).